Here is a 238-residue protein sequence, read N- to C-terminus: MKGRSLNTEDRARLEAAIGYRFAEKERLDRALTHSSARSGRAINYQRLEFLGDRVLGLCVAELLFQTFTDANEGELSVRLNQLVSAESCAKVADELSLHEFIRTGSDVKKITGKHMMNVRADVVESLIAAIYLDGGLDAARRFVLEHWTHRAASADGARRDAKTELQEWAHAKFGVAPKYRTDDRSGPDHDPRFTVTVEVDGIAPETGVDRSKRGAEQVAAMKLLEREGVWQKRSAGN.

The region spanning 11–136 (RARLEAAIGY…LIAAIYLDGG (126 aa)) is the RNase III domain. Residue Glu-49 coordinates Mg(2+). The active site involves Asp-53. 2 residues coordinate Mg(2+): Asp-122 and Glu-125. Residue Glu-125 is part of the active site. A DRBM domain is found at 161–230 (DAKTELQEWA…AMKLLEREGV (70 aa)).

Belongs to the ribonuclease III family. In terms of assembly, homodimer. Requires Mg(2+) as cofactor.

The protein resides in the cytoplasm. The catalysed reaction is Endonucleolytic cleavage to 5'-phosphomonoester.. In terms of biological role, digests double-stranded RNA. Involved in the processing of primary rRNA transcript to yield the immediate precursors to the large and small rRNAs (23S and 16S). Processes some mRNAs, and tRNAs when they are encoded in the rRNA operon. Processes pre-crRNA and tracrRNA of type II CRISPR loci if present in the organism. This is Ribonuclease 3 from Rhizobium meliloti (strain 1021) (Ensifer meliloti).